We begin with the raw amino-acid sequence, 133 residues long: Transcription antitermination protein NusB (133 aa).

It belongs to the NusB family.

Its function is as follows. Involved in transcription antitermination. Required for transcription of ribosomal RNA (rRNA) genes. Binds specifically to the boxA antiterminator sequence of the ribosomal RNA (rrn) operons. The protein is Transcription antitermination protein NusB of Pediococcus pentosaceus (strain ATCC 25745 / CCUG 21536 / LMG 10740 / 183-1w).